A 356-amino-acid chain; its full sequence is Carbohydrate sulfotransferase 10 (356 aa).

Residues 1–6 are Cytoplasmic-facing; sequence MHHQWL. A helical; Signal-anchor for type II membrane protein membrane pass occupies residues 7–27; the sequence is LLAACFWVIFMFMVASKFITL. Residues 28–356 are Lumenal-facing; it reads TFKDPDGYSA…GYQKPDFLLN (329 aa). N99 is a glycosylation site (N-linked (GlcNAc...) asparagine). 3'-phosphoadenylyl sulfate is bound by residues 127–133 and 189–197; these read PKVGNTQ and RDPFERLIS. N-linked (GlcNAc...) asparagine glycosylation is found at N228 and N316.

The protein belongs to the sulfotransferase 2 family.

The protein resides in the golgi apparatus membrane. The enzyme catalyses 3-O-{beta-D-GlcA-(1-&gt;[3)-alpha-D-Xyl-(1-&gt;3)-beta-D-GlcA-(1-&gt;](n)-4)-beta-D-Xyl-(1-&gt;4)-Rib-ol-P-Rib-ol-P-3-beta-D-GalNAc-(1-&gt;3)-beta-D-GlcNAc-(1-&gt;4)-O-6-P-alpha-D-Man}-L-Thr-[protein] + 3'-phosphoadenylyl sulfate = 3-O-{O-3-S-beta-D-GlcA-(1-&gt;[3)-alpha-D-Xyl-(1-&gt;3)-beta-D-GlcA-(1-&gt;](n)-4)-beta-D-Xyl-(1-&gt;4)-Rib-ol-P-Rib-ol-P-3-beta-D-GalNAc-(1-&gt;3)-beta-D-GlcNAc-(1-&gt;4)-O-6-P-alpha-D-Man}-L-Thr-[protein] + adenosine 3',5'-bisphosphate + H(+). It carries out the reaction 17beta-estradiol 3-O-(beta-D-glucuronate) + 3'-phosphoadenylyl sulfate = 17beta-estradiol 3-O-(3-sulfo-beta-D-glucuronate) + adenosine 3',5'-bisphosphate + H(+). The catalysed reaction is 17beta-estradiol 3-O-(beta-D-glucuronate) 17-sulfate + 3'-phosphoadenylyl sulfate = 17beta-estradiol 3-O-(3-sulfo-beta-D-glucuronate) 17-sulfate + adenosine 3',5'-bisphosphate + H(+). It catalyses the reaction 17beta-estradiol 17-O-(beta-D-glucuronate) + 3'-phosphoadenylyl sulfate = 17beta-estradiol 17-O-(3-sulfo-beta-D-glucuronate) + adenosine 3',5'-bisphosphate + H(+). The enzyme catalyses 16alpha,17beta-estriol 3-O-(beta-D-glucuronate) + 3'-phosphoadenylyl sulfate = 16alpha,17beta-estriol 3-O-(3-sulfo-beta-D-glucuronate) + adenosine 3',5'-bisphosphate + H(+). It carries out the reaction 16alpha,17beta-estriol 16-O-(beta-D-glucuronate) + 3'-phosphoadenylyl sulfate = 16alpha,17beta-estriol 16-O-(3-sulfo-beta-D-glucuronate) + adenosine 3',5'-bisphosphate + H(+). The catalysed reaction is 16alpha,17beta-estriol 17-O-(beta-D-glucuronate) + 3'-phosphoadenylyl sulfate = 16alpha,17beta-estriol 17-O-(3-sulfo-beta-D-glucuronate) + adenosine 3',5'-bisphosphate + H(+). It catalyses the reaction estrone 3-O-(beta-D-glucuronate) + 3'-phosphoadenylyl sulfate = estrone 3-O-(3-sulfo-beta-D-glucuronate) + adenosine 3',5'-bisphosphate + H(+). The enzyme catalyses 3alpha,20alpha-dihydroxy-5beta-pregnane 3-O-(beta-D-glucuronate) + 3'-phosphoadenylyl sulfate = 3alpha,20alpha-dihydroxy-5beta-pregnane 3-O-(3-sulfo-beta-D-glucuronate) + adenosine 3',5'-bisphosphate + H(+). It carries out the reaction testosterone 17-O-(beta-D-glucuronate) + 3'-phosphoadenylyl sulfate = testosterone 17-O-(3-sulfo-beta-D-glucuronate) + adenosine 3',5'-bisphosphate + H(+). The catalysed reaction is 3beta-androst-5-en-17-one 3-O-(beta-D-glucuronate) + 3'-phosphoadenylyl sulfate = 3beta-androst-5-en-17-one 3-O-(3-sulfo-beta-D-glucuronate) + adenosine 3',5'-bisphosphate + H(+). It catalyses the reaction 3alpha,17alpha-dihydroxy-5beta-androstane-11-one-17beta-carboxylate 3-O-(beta-D-glucuronate) + 3'-phosphoadenylyl sulfate = 3alpha,17alpha-dihydroxy-5beta-androstane-11-one-17beta-carboxylate 3-O-(3-sulfo-beta-D-glucuronate) + adenosine 3',5'-bisphosphate + H(+). The enzyme catalyses 3alpha-hydroxyetiocholan-17-one 3-O-(beta-D-glucuronate) + 3'-phosphoadenylyl sulfate = 3alpha-hydroxyetiocholan-17-one 3-O-(3-sulfo-beta-D-glucuronate) + adenosine 3',5'-bisphosphate + H(+). Its pathway is steroid metabolism. The protein operates within protein modification; carbohydrate sulfation. In terms of biological role, catalyzes the transfer of sulfate from 3'-phosphoadenylyl sulfate (PAPS) to position 3 of terminal glucuronic acid of both protein- and lipid-linked oligosaccharides. Participates in biosynthesis of HNK-1 carbohydrate structure 3-O-sulfo-beta-D-GlcA-(1-&gt;3)-beta-D-Gal-(1-&gt;4)-D-GlcNAc-R, a sulfated glucuronyl-lactosaminyl residue carried by many neural recognition molecules, which is involved in cell interactions during ontogenetic development and in synaptic plasticity in the adult. May be indirectly involved in synapse plasticity of the hippocampus, via its role in HNK-1 biosynthesis. Sulfates terminal glucuronyl residue of the laminin globular (LG)-domain binding epitope on DAG1/alpha-dystroglycan and prevents further polymerization by LARGE1 glycosyltransferase. Likely defines the chain length of LG epitope, conferring binding specificity to extracellular matrix components. Plays a role in down-regulating the steroid hormones. Sulfates glucuronidated estrogens and androgens with an impact in hormone cycle and fertility. Has a preference for glucuronyl moiety at the 3-hydroxyl group of a sterol ring rather than the 17-hydroxyl group, showing high catalytic efficiency for 17beta-estradiol 3-O-(beta-D-glucuronate) and dehydroepiandrosterone 3-O-(beta-D-glucuronate) hormones. This chain is Carbohydrate sulfotransferase 10, found in Mus musculus (Mouse).